Here is a 360-residue protein sequence, read N- to C-terminus: tRNA-specific 2-thiouridylase MnmA (360 aa).

ATP contacts are provided by residues 9-16 (AMSGGVDS) and leucine 35. The active-site Nucleophile is the cysteine 104. Cysteine 104 and cysteine 197 form a disulfide bridge. Glycine 128 contributes to the ATP binding site. Residues 147 to 149 (KDQ) are interaction with tRNA. The active-site Cysteine persulfide intermediate is cysteine 197.

This sequence belongs to the MnmA/TRMU family.

Its subcellular location is the cytoplasm. It carries out the reaction S-sulfanyl-L-cysteinyl-[protein] + uridine(34) in tRNA + AH2 + ATP = 2-thiouridine(34) in tRNA + L-cysteinyl-[protein] + A + AMP + diphosphate + H(+). Its function is as follows. Catalyzes the 2-thiolation of uridine at the wobble position (U34) of tRNA, leading to the formation of s(2)U34. The sequence is that of tRNA-specific 2-thiouridylase MnmA from Salinispora tropica (strain ATCC BAA-916 / DSM 44818 / JCM 13857 / NBRC 105044 / CNB-440).